The primary structure comprises 320 residues: Small ribosomal subunit protein uS15m (320 aa).

2 disordered regions span residues 37-60 (NISQ…AQQR) and 214-242 (QSLE…DTGS).

Belongs to the universal ribosomal protein uS15 family. In terms of assembly, component of the mitochondrial small ribosomal subunit (mt-SSU). Mature N.crassa 74S mitochondrial ribosomes consist of a small (37S) and a large (54S) subunit. The 37S small subunit contains a 16S ribosomal RNA (16S mt-rRNA) and 32 different proteins. The 54S large subunit contains a 23S rRNA (23S mt-rRNA) and 42 different proteins.

The protein localises to the mitochondrion. Functionally, component of the mitochondrial ribosome (mitoribosome), a dedicated translation machinery responsible for the synthesis of mitochondrial genome-encoded proteins, including at least some of the essential transmembrane subunits of the mitochondrial respiratory chain. The mitoribosomes are attached to the mitochondrial inner membrane and translation products are cotranslationally integrated into the membrane. This chain is Small ribosomal subunit protein uS15m (mrps28), found in Neurospora crassa (strain ATCC 24698 / 74-OR23-1A / CBS 708.71 / DSM 1257 / FGSC 987).